The primary structure comprises 402 residues: Pyruvate synthase subunit PorA (402 aa).

In terms of assembly, heterotetramer of one alpha, one beta, one delta and one gamma chain.

It carries out the reaction 2 oxidized [2Fe-2S]-[ferredoxin] + pyruvate + CoA = 2 reduced [2Fe-2S]-[ferredoxin] + acetyl-CoA + CO2 + H(+). The sequence is that of Pyruvate synthase subunit PorA (porA) from Methanosarcina barkeri (strain Fusaro / DSM 804).